The primary structure comprises 181 residues: FMN reductase (NADH) RutF (181 aa).

Belongs to the non-flavoprotein flavin reductase family. RutF subfamily.

The catalysed reaction is FMNH2 + NAD(+) = FMN + NADH + 2 H(+). Functionally, catalyzes the reduction of FMN to FMNH2 which is used to reduce pyrimidine by RutA via the Rut pathway. This is FMN reductase (NADH) RutF from Ancylobacter novellus (strain ATCC 8093 / DSM 506 / JCM 20403 / CCM 1077 / IAM 12100 / NBRC 12443 / NCIMB 10456) (Starkeya novella).